Here is a 375-residue protein sequence, read N- to C-terminus: Growth/differentiation factor 8 (375 aa).

An N-terminal signal peptide occupies residues 1 to 23; that stretch reads MQKIVVYVYIYLFVQISVDPVAL. Positions 24–266 are excised as a propeptide; sequence DGSSQPTENT…VTDTPKRSRR (243 aa). Asparagine 71 is a glycosylation site (N-linked (GlcNAc...) asparagine). Disulfide bonds link cysteine 272-cysteine 282, cysteine 281-cysteine 340, cysteine 309-cysteine 372, and cysteine 313-cysteine 374.

The protein belongs to the TGF-beta family. Homodimer; disulfide-linked.

The protein resides in the secreted. Its function is as follows. Acts specifically as a negative regulator of skeletal muscle growth. This is Growth/differentiation factor 8 (MSTN) from Coturnix coturnix (Common quail).